A 1299-amino-acid polypeptide reads, in one-letter code: Phosphoribosylformylglycinamidine synthase (1299 aa).

ATP-binding positions include 310–321 (GAATGAGGEIRD), 389–391 (TGY), and Ala680. Asp681, Glu720, Asn724, and Asp888 together coordinate Mg(2+). Ser890 serves as a coordination point for ATP. Residues 1046-1299 (VAVLREQGVN…MFRNARVWLG (254 aa)) form the Glutamine amidotransferase type-1 domain. Cys1139 functions as the Nucleophile in the catalytic mechanism. Residues His1264 and Glu1266 contribute to the active site.

It in the N-terminal section; belongs to the FGAMS family. In terms of assembly, monomer.

It localises to the cytoplasm. It catalyses the reaction N(2)-formyl-N(1)-(5-phospho-beta-D-ribosyl)glycinamide + L-glutamine + ATP + H2O = 2-formamido-N(1)-(5-O-phospho-beta-D-ribosyl)acetamidine + L-glutamate + ADP + phosphate + H(+). It participates in purine metabolism; IMP biosynthesis via de novo pathway; 5-amino-1-(5-phospho-D-ribosyl)imidazole from N(2)-formyl-N(1)-(5-phospho-D-ribosyl)glycinamide: step 1/2. In terms of biological role, phosphoribosylformylglycinamidine synthase involved in the purines biosynthetic pathway. Catalyzes the ATP-dependent conversion of formylglycinamide ribonucleotide (FGAR) and glutamine to yield formylglycinamidine ribonucleotide (FGAM) and glutamate. The sequence is that of Phosphoribosylformylglycinamidine synthase from Myxococcus xanthus (strain DK1622).